The chain runs to 172 residues: Adenylate kinase isoenzyme 6 (172 aa).

Gly13, Gly15, Lys16, Thr17, and Thr18 together coordinate ATP. Positions 33–56 (NVGDLAREGQLYDGYDEEYDCPIL) are NMPbind. Residues 108 to 118 (NRGYNEKKLKD) form an LID region. Residues Arg109 and Lys148 each contribute to the ATP site.

It belongs to the adenylate kinase family. AK6 subfamily. As to quaternary structure, monomer and homodimer. Interacts with small ribosomal subunit protein uS11. Not a structural component of 43S pre-ribosomes, but transiently interacts with them by binding to uS11. Interacts with COIL (via C-terminus).

It is found in the cytoplasm. Its subcellular location is the nucleus. The protein resides in the nucleoplasm. It localises to the cajal body. The catalysed reaction is AMP + ATP = 2 ADP. The enzyme catalyses ATP + H2O = ADP + phosphate + H(+). Broad-specificity nucleoside monophosphate (NMP) kinase that catalyzes the reversible transfer of the terminal phosphate group between nucleoside triphosphates and monophosphates. Also has ATPase activity. Involved in the late cytoplasmic maturation steps of the 40S ribosomal particles, specifically 18S rRNA maturation. While NMP activity is not required for ribosome maturation, ATPase activity is. Associates transiently with small ribosomal subunit protein uS11. ATP hydrolysis breaks the interaction with uS11. May temporarily remove uS11 from the ribosome to enable a conformational change of the ribosomal RNA that is needed for the final maturation step of the small ribosomal subunit. Its NMP activity may have a role in nuclear energy homeostasis. May be involved in regulation of Cajal body (CB) formation. The polypeptide is Adenylate kinase isoenzyme 6 (Bos taurus (Bovine)).